Consider the following 420-residue polypeptide: Deoxyribodipyrimidine photo-lyase (420 aa).

The Photolyase/cryptochrome alpha/beta domain maps to 2 to 124 (GPLLVWHRGD…PLHLLPAPHL (123 aa)). The tract at residues 147-176 (APPLPPPEALPKGPEEGEIPREDPGLPLPE) is disordered. Residues 159–170 (GPEEGEIPREDP) show a composition bias toward basic and acidic residues. Position 197 (tyrosine 197) interacts with FAD. Arginine 201 is a binding site for DNA. Residues 209–213 (GSRLS), tryptophan 241, arginine 248, asparagine 310, and 341–343 (DGD) each bind FAD. 2 interaction with DNA regions span residues 244–251 (ELLWRDFS) and 310–311 (NR). Glutamine 373 lines the DNA pocket.

Belongs to the DNA photolyase class-1 family. In terms of assembly, monomer. The cofactor is FAD.

The catalysed reaction is cyclobutadipyrimidine (in DNA) = 2 pyrimidine residues (in DNA).. In terms of biological role, involved in repair of UV radiation-induced DNA damage. Catalyzes the light-dependent monomerization (300-600 nm) of cyclobutyl pyrimidine dimers (in cis-syn configuration), which are formed between adjacent bases on the same DNA strand upon exposure to ultraviolet radiation. The chain is Deoxyribodipyrimidine photo-lyase (phr) from Thermus thermophilus (strain ATCC 27634 / DSM 579 / HB8).